A 344-amino-acid polypeptide reads, in one-letter code: Glyceraldehyde-3-phosphate dehydrogenase (344 aa).

NAD(+) is bound by residues 11–12 (TI) and glycine 110. Residue 139–141 (SCN) coordinates D-glyceraldehyde 3-phosphate. The active-site Nucleophile is the cysteine 140. Residue arginine 169 participates in NAD(+) binding. 195–196 (HG) lines the D-glyceraldehyde 3-phosphate pocket. Glutamine 302 serves as a coordination point for NAD(+).

Belongs to the glyceraldehyde-3-phosphate dehydrogenase family. In terms of assembly, homotetramer.

It is found in the cytoplasm. It catalyses the reaction D-glyceraldehyde 3-phosphate + phosphate + NADP(+) = (2R)-3-phospho-glyceroyl phosphate + NADPH + H(+). The catalysed reaction is D-glyceraldehyde 3-phosphate + phosphate + NAD(+) = (2R)-3-phospho-glyceroyl phosphate + NADH + H(+). It functions in the pathway carbohydrate degradation; glycolysis; pyruvate from D-glyceraldehyde 3-phosphate: step 1/5. The chain is Glyceraldehyde-3-phosphate dehydrogenase from Pyrobaculum islandicum (strain DSM 4184 / JCM 9189 / GEO3).